Consider the following 672-residue polypeptide: Penicillin-binding protein activator LpoA (672 aa).

Residues 1–26 form the signal peptide; the sequence is MLPFHLVRTQAGRVIPVLLAALFLAG. C27 is lipidated: N-palmitoyl cysteine. A lipid anchor (S-diacylglycerol cysteine) is attached at C27. Residues 298–336 form a disordered region; it reads APPTDTAQAGQVTPSSDGQNAQSPAPYSDQAVASTTPAP. Over residues 305 to 322 the composition is skewed to polar residues; sequence QAGQVTPSSDGQNAQSPA. Residues 327-336 are compositionally biased toward low complexity; sequence QAVASTTPAP.

The protein belongs to the LpoA family. As to quaternary structure, interacts with PBP1a.

Its subcellular location is the cell outer membrane. Regulator of peptidoglycan synthesis that is essential for the function of penicillin-binding protein 1A (PBP1a). The chain is Penicillin-binding protein activator LpoA from Pectobacterium parmentieri (strain WPP163) (Pectobacterium wasabiae (strain WPP163)).